A 440-amino-acid polypeptide reads, in one-letter code: Chromosome partition protein MukF (440 aa).

The leucine-zipper stretch occupies residues leucine 208 to isoleucine 236.

The protein belongs to the MukF family. Interacts, and probably forms a ternary complex, with MukE and MukB via its C-terminal region. The complex formation is stimulated by calcium or magnesium. It is required for an interaction between MukE and MukB.

It localises to the cytoplasm. Its subcellular location is the nucleoid. Involved in chromosome condensation, segregation and cell cycle progression. May participate in facilitating chromosome segregation by condensation DNA from both sides of a centrally located replisome during cell division. Not required for mini-F plasmid partitioning. Probably acts via its interaction with MukB and MukE. Overexpression results in anucleate cells. It has a calcium binding activity. This Shigella boydii serotype 18 (strain CDC 3083-94 / BS512) protein is Chromosome partition protein MukF.